Reading from the N-terminus, the 421-residue chain is D-amino acid dehydrogenase (421 aa).

Position 3-17 (3-17 (VIVLGSGVIGVASAY)) interacts with FAD.

It belongs to the DadA oxidoreductase family. It depends on FAD as a cofactor.

The catalysed reaction is a D-alpha-amino acid + A + H2O = a 2-oxocarboxylate + AH2 + NH4(+). The protein operates within amino-acid degradation; D-alanine degradation; NH(3) and pyruvate from D-alanine: step 1/1. Functionally, oxidative deamination of D-amino acids. The protein is D-amino acid dehydrogenase of Acinetobacter baumannii (strain AB307-0294).